Reading from the N-terminus, the 148-residue chain is Large ribosomal subunit protein uL15 (148 aa).

The segment at 1-51 (MNLSNLKPAEGSTKTRKRIGRGPGSGLGGTSTRGHKGAKSRSGYSKKIGFE) is disordered. Residues 21 to 31 (RGPGSGLGGTS) are compositionally biased toward gly residues.

It belongs to the universal ribosomal protein uL15 family. Part of the 50S ribosomal subunit.

In terms of biological role, binds to the 23S rRNA. This chain is Large ribosomal subunit protein uL15, found in Phocaeicola vulgatus (strain ATCC 8482 / DSM 1447 / JCM 5826 / CCUG 4940 / NBRC 14291 / NCTC 11154) (Bacteroides vulgatus).